The chain runs to 218 residues: DNA-directed RNA polymerase III subunit RPC7-like (218 aa).

The disordered stretch occupies residues 133-218 (LPKRPPKTTE…SDDNMDEAIY (86 aa)). The segment covering 139–160 (KTTEDKEETIQKLETLEKKEEE) has biased composition (basic and acidic residues). Composition is skewed to acidic residues over residues 161 to 193 (VTSE…EETD) and 201 to 218 (NGED…EAIY).

The protein belongs to the eukaryotic RPC7 RNA polymerase subunit family. Component of the RNA polymerase III (Pol III) complex consisting of 17 subunits. Pol III exists as two alternative complexes defined by the mutually exclusive incorporation of subunit POLR3G/RPC7alpha or POLR3GL/RPC7beta. Found in a trimeric complex with POLR3C/RPC3 and POLR3F/RPC6. Directly interacts with POLR3C. Widely expressed. Expressed in CD4-positive T cells.

The protein resides in the nucleus. DNA-dependent RNA polymerase catalyzes the transcription of DNA into RNA using the four ribonucleoside triphosphates as substrates. Specific peripheric component of RNA polymerase III which synthesizes small RNAs, such as 5S rRNA and tRNAs. The chain is DNA-directed RNA polymerase III subunit RPC7-like from Homo sapiens (Human).